The sequence spans 550 residues: Undecaprenyl phosphate-alpha-4-amino-4-deoxy-L-arabinose arabinosyl transferase 2 (550 aa).

Transmembrane regions (helical) follow at residues 4–24, 81–101, 110–132, 176–196, 204–224, 255–275, 288–308, 313–333, 348–368, 381–401, and 409–429; these read LKPG…PLSF, FAVH…VYWL, WLGL…GTYA, FMTK…PWVI, VFIY…PWVI, APFW…LGLL, TQSG…FFSL, LPTY…RYAA, LLFG…WGLA, VLLG…TLRA, and AALC…QQVI.

The protein belongs to the glycosyltransferase 83 family.

Its subcellular location is the cell inner membrane. The catalysed reaction is 4-amino-4-deoxy-alpha-L-arabinopyranosyl di-trans,octa-cis-undecaprenyl phosphate + lipid IVA = lipid IIA + di-trans,octa-cis-undecaprenyl phosphate.. It participates in lipopolysaccharide metabolism; 4-amino-4-deoxy-beta-L-arabinose-lipid A biosynthesis. Catalyzes the transfer of the L-Ara4N moiety of the glycolipid undecaprenyl phosphate-alpha-L-Ara4N to lipid A. The modified arabinose is attached to lipid A and is required for resistance to polymyxin and cationic antimicrobial peptides. The protein is Undecaprenyl phosphate-alpha-4-amino-4-deoxy-L-arabinose arabinosyl transferase 2 of Sodalis glossinidius (strain morsitans).